The chain runs to 186 residues: Peptidyl-tRNA hydrolase (186 aa).

Tyr-14 is a tRNA binding site. Residue His-19 is the Proton acceptor of the active site. TRNA-binding residues include Tyr-61, Asn-63, and Asn-107.

This sequence belongs to the PTH family. As to quaternary structure, monomer.

The protein resides in the cytoplasm. It carries out the reaction an N-acyl-L-alpha-aminoacyl-tRNA + H2O = an N-acyl-L-amino acid + a tRNA + H(+). In terms of biological role, hydrolyzes ribosome-free peptidyl-tRNAs (with 1 or more amino acids incorporated), which drop off the ribosome during protein synthesis, or as a result of ribosome stalling. Its function is as follows. Catalyzes the release of premature peptidyl moieties from peptidyl-tRNA molecules trapped in stalled 50S ribosomal subunits, and thus maintains levels of free tRNAs and 50S ribosomes. This is Peptidyl-tRNA hydrolase from Helicobacter pylori (strain G27).